A 495-amino-acid chain; its full sequence is Anaerobic nitric oxide reductase flavorubredoxin (495 aa).

The zinc metallo-hydrolase stretch occupies residues 30–210; it reads HKGTSYNSYL…PFSPLVTAKI (181 aa). Fe cation-binding residues include histidine 79, glutamate 81, aspartate 83, histidine 147, aspartate 166, and histidine 227. The Flavodoxin-like domain occupies 254-393; that stretch reads ITLFYDSMSN…ECREHGRQLA (140 aa). FMN-binding positions include 260–264 and 342–369; these read SMSNN and AFGS…DISI. The Rubredoxin-like domain maps to 438-489; that stretch reads DQAMLCTVCQWVYDPAQGEPDQLVAPGTPWAQVPDSFLCPGCGIGKEVFEPC. Residues cysteine 443, cysteine 446, cysteine 476, and cysteine 479 each coordinate Fe cation.

The protein in the N-terminal section; belongs to the zinc metallo-hydrolase group 3 family. Homotetramer. The cofactor is Fe cation. FMN serves as cofactor.

Its subcellular location is the cytoplasm. It functions in the pathway nitrogen metabolism; nitric oxide reduction. Anaerobic nitric oxide reductase; uses NADH to detoxify nitric oxide (NO), protecting several 4Fe-4S NO-sensitive enzymes. Has at least 2 reductase partners, only one of which (NorW, flavorubredoxin reductase) has been identified. NO probably binds to the di-iron center; electrons enter from the NorW at rubredoxin and are transferred sequentially to the FMN center and the di-iron center. Also able to function as an aerobic oxygen reductase. This chain is Anaerobic nitric oxide reductase flavorubredoxin, found in Aeromonas hydrophila subsp. hydrophila (strain ATCC 7966 / DSM 30187 / BCRC 13018 / CCUG 14551 / JCM 1027 / KCTC 2358 / NCIMB 9240 / NCTC 8049).